The chain runs to 131 residues: Cytochrome b5 (131 aa).

The Cytochrome b5 heme-binding domain maps to 3–79 (AKIFSLDEVS…LEEYLIGSLD (77 aa)). Heme is bound by residues His-38 and His-62. The helical transmembrane segment at 108–125 (IILPALAIIGALVYKYVI) threads the bilayer.

It belongs to the cytochrome b5 family.

It is found in the endoplasmic reticulum membrane. Its subcellular location is the microsome membrane. Functionally, membrane bound hemoprotein which function as an electron carrier for several membrane bound oxygenases. The sequence is that of Cytochrome b5 from Rhizopus stolonifer (Rhizopus nigricans).